The following is a 519-amino-acid chain: ATP synthase subunit alpha (519 aa).

Position 174–181 (glycine 174–threonine 181) interacts with ATP.

It belongs to the ATPase alpha/beta chains family. As to quaternary structure, F-type ATPases have 2 components, CF(1) - the catalytic core - and CF(0) - the membrane proton channel. CF(1) has five subunits: alpha(3), beta(3), gamma(1), delta(1), epsilon(1). CF(0) has three main subunits: a(1), b(2) and c(9-12). The alpha and beta chains form an alternating ring which encloses part of the gamma chain. CF(1) is attached to CF(0) by a central stalk formed by the gamma and epsilon chains, while a peripheral stalk is formed by the delta and b chains.

The protein localises to the cell inner membrane. The enzyme catalyses ATP + H2O + 4 H(+)(in) = ADP + phosphate + 5 H(+)(out). In terms of biological role, produces ATP from ADP in the presence of a proton gradient across the membrane. The alpha chain is a regulatory subunit. The polypeptide is ATP synthase subunit alpha (Paracidovorax citrulli (strain AAC00-1) (Acidovorax citrulli)).